Reading from the N-terminus, the 253-residue chain is Adenosylcobinamide-GDP ribazoletransferase (253 aa).

A run of 7 helical transmembrane segments spans residues 33–53, 56–76, 106–126, 132–152, 178–198, 209–229, and 233–253; these read ISPL…YVLL, ILEA…RGFN, IGSG…VALL, FYTI…GLYI, VLLF…FLVF, LGGS…PLFL, and EITN…LYLH.

The protein belongs to the CobS family. It depends on Mg(2+) as a cofactor.

The protein localises to the cell membrane. It carries out the reaction alpha-ribazole + adenosylcob(III)inamide-GDP = adenosylcob(III)alamin + GMP + H(+). The catalysed reaction is alpha-ribazole 5'-phosphate + adenosylcob(III)inamide-GDP = adenosylcob(III)alamin 5'-phosphate + GMP + H(+). It functions in the pathway cofactor biosynthesis; adenosylcobalamin biosynthesis; adenosylcobalamin from cob(II)yrinate a,c-diamide: step 7/7. Its function is as follows. Joins adenosylcobinamide-GDP and alpha-ribazole to generate adenosylcobalamin (Ado-cobalamin). Also synthesizes adenosylcobalamin 5'-phosphate from adenosylcobinamide-GDP and alpha-ribazole 5'-phosphate. The polypeptide is Adenosylcobinamide-GDP ribazoletransferase (Saccharolobus islandicus (strain M.16.27) (Sulfolobus islandicus)).